The chain runs to 152 residues: Ribonuclease pancreatic (152 aa).

Positions 1–24 (MALDKSVILLPLLVLVLLVLGCLG) are cleaved as a signal peptide. Substrate contacts are provided by lysine 31 and arginine 34. Histidine 36 acts as the Proton acceptor in catalysis. An N-linked (GlcNAc...) asparagine glycan is attached at asparagine 46. 4 cysteine pairs are disulfide-bonded: cysteine 50–cysteine 108, cysteine 64–cysteine 119, cysteine 82–cysteine 134, and cysteine 89–cysteine 96. Substrate contacts are provided by residues 65–69 (KPVNT), lysine 90, and arginine 109. Asparagine 112 carries N-linked (GlcNAc...) asparagine glycosylation. The active-site Proton donor is histidine 143.

It belongs to the pancreatic ribonuclease family. Monomer. Interacts with and forms tight 1:1 complexes with RNH1. Dimerization of two such complexes may occur. Interaction with RNH1 inhibits this protein.

The protein resides in the secreted. The enzyme catalyses an [RNA] containing cytidine + H2O = an [RNA]-3'-cytidine-3'-phosphate + a 5'-hydroxy-ribonucleotide-3'-[RNA].. It catalyses the reaction an [RNA] containing uridine + H2O = an [RNA]-3'-uridine-3'-phosphate + a 5'-hydroxy-ribonucleotide-3'-[RNA].. In terms of biological role, endonuclease that catalyzes the cleavage of RNA on the 3' side of pyrimidine nucleotides. Acts on single-stranded and double-stranded RNA. In Miopithecus talapoin (Angolan talapoin), this protein is Ribonuclease pancreatic (RNASE1).